The chain runs to 460 residues: tRNA(Ile)-lysidine synthase (460 aa).

Residue 30 to 35 (SGGLDS) coordinates ATP.

This sequence belongs to the tRNA(Ile)-lysidine synthase family.

It is found in the cytoplasm. It carries out the reaction cytidine(34) in tRNA(Ile2) + L-lysine + ATP = lysidine(34) in tRNA(Ile2) + AMP + diphosphate + H(+). Functionally, ligates lysine onto the cytidine present at position 34 of the AUA codon-specific tRNA(Ile) that contains the anticodon CAU, in an ATP-dependent manner. Cytidine is converted to lysidine, thus changing the amino acid specificity of the tRNA from methionine to isoleucine. This is tRNA(Ile)-lysidine synthase from Yersinia pseudotuberculosis serotype I (strain IP32953).